Consider the following 287-residue polypeptide: Diphthine methyl ester synthase (287 aa).

S-adenosyl-L-methionine contacts are provided by residues leucine 9, aspartate 84, glycine 87, 112–113 (SI), leucine 163, valine 221, and histidine 248.

This sequence belongs to the diphthine synthase family.

It is found in the cytoplasm. It catalyses the reaction 2-[(3S)-amino-3-carboxypropyl]-L-histidyl-[translation elongation factor 2] + 4 S-adenosyl-L-methionine = diphthine methyl ester-[translation elongation factor 2] + 4 S-adenosyl-L-homocysteine + 3 H(+). Its pathway is protein modification; peptidyl-diphthamide biosynthesis. Its function is as follows. S-adenosyl-L-methionine-dependent methyltransferase that catalyzes four methylations of the modified target histidine residue in translation elongation factor 2 (EF-2), to form an intermediate called diphthine methyl ester. The four successive methylation reactions represent the second step of diphthamide biosynthesis. The polypeptide is Diphthine methyl ester synthase (dph-5) (Neurospora crassa (strain ATCC 24698 / 74-OR23-1A / CBS 708.71 / DSM 1257 / FGSC 987)).